A 334-amino-acid polypeptide reads, in one-letter code: Photosystem II assembly protein Ycf48 (334 aa).

Residues 1–22 form the signal peptide; sequence MAKMLKLWRLVLLAAFSLLLMA.

The protein belongs to the Ycf48 family. As to quaternary structure, part of early PSII assembly complexes which includes D1 (psbA) and PsbI; not found in mature PSII. Binds to the lumenal side of PSII complexes. Interacts with YidC.

It localises to the cellular thylakoid lumen. Functionally, a factor required for optimal assembly of photosystem II (PSII), acting in the early stages of PSII assembly. Also plays a role in replacement of photodamaged D1 (psbA). Assists YidC in synthesis of chlorophyll-binding proteins. In Synechococcus sp. (strain JA-3-3Ab) (Cyanobacteria bacterium Yellowstone A-Prime), this protein is Photosystem II assembly protein Ycf48.